The chain runs to 323 residues: Probable cell division protein WhiA (323 aa).

The segment at residues 275–309 (TLKELGEMLTTGQVSKSGINHRLRKLDQIAERLRS) is a DNA-binding region (H-T-H motif).

Belongs to the WhiA family.

Involved in cell division and chromosome segregation. This is Probable cell division protein WhiA from Listeria innocua serovar 6a (strain ATCC BAA-680 / CLIP 11262).